We begin with the raw amino-acid sequence, 159 residues long: Growth arrest and DNA damage-inducible protein GADD45 gamma (159 aa).

The homodimerization stretch occupies residues valine 43–cysteine 86.

Belongs to the GADD45 family. As to quaternary structure, undergoes concentration-dependent homodimerization, which is required for growth inhibititory activity and enhances interaction with PCNA. Interacts with GADD45GIP1. Interacts with PCNA.

Its function is as follows. Involved in the regulation of growth and apoptosis. Mediates activation of stress-responsive MTK1/MEKK4 MAPKKK. In Mus musculus (Mouse), this protein is Growth arrest and DNA damage-inducible protein GADD45 gamma (Gadd45g).